A 189-amino-acid chain; its full sequence is Small ribosomal subunit protein uS7 (189 aa).

It belongs to the universal ribosomal protein uS7 family. In terms of assembly, component of the small ribosomal subunit.

It localises to the cytoplasm. In Encephalitozoon cuniculi (strain GB-M1) (Microsporidian parasite), this protein is Small ribosomal subunit protein uS7 (RPS5).